The following is a 271-amino-acid chain: Probable ribosomal RNA small subunit methyltransferase A (271 aa).

Residues H19, L21, G46, E67, D92, and N107 each contribute to the S-adenosyl-L-methionine site.

The protein belongs to the class I-like SAM-binding methyltransferase superfamily. rRNA adenine N(6)-methyltransferase family. RsmA subfamily.

It localises to the cytoplasm. Specifically dimethylates two adjacent adenosines in the loop of a conserved hairpin near the 3'-end of 16S rRNA in the 30S particle. May play a critical role in biogenesis of 30S subunits. This chain is Probable ribosomal RNA small subunit methyltransferase A, found in Methanosarcina mazei (strain ATCC BAA-159 / DSM 3647 / Goe1 / Go1 / JCM 11833 / OCM 88) (Methanosarcina frisia).